We begin with the raw amino-acid sequence, 359 residues long: 3-dehydroquinate synthase (359 aa).

Residues 71–76 (DGEAHK), 105–109 (GVIGD), 129–130 (TT), lysine 142, lysine 151, and 169–172 (TLHT) contribute to the NAD(+) site. Residues glutamate 184, histidine 247, and histidine 264 each coordinate Zn(2+).

It belongs to the sugar phosphate cyclases superfamily. Dehydroquinate synthase family. Requires NAD(+) as cofactor. It depends on Co(2+) as a cofactor. Zn(2+) serves as cofactor.

Its subcellular location is the cytoplasm. It catalyses the reaction 7-phospho-2-dehydro-3-deoxy-D-arabino-heptonate = 3-dehydroquinate + phosphate. Its pathway is metabolic intermediate biosynthesis; chorismate biosynthesis; chorismate from D-erythrose 4-phosphate and phosphoenolpyruvate: step 2/7. Its function is as follows. Catalyzes the conversion of 3-deoxy-D-arabino-heptulosonate 7-phosphate (DAHP) to dehydroquinate (DHQ). The sequence is that of 3-dehydroquinate synthase from Neisseria meningitidis serogroup A / serotype 4A (strain DSM 15465 / Z2491).